Consider the following 361-residue polypeptide: Trans-enoyl reductase gkaC (361 aa).

Residues 15–357 (EDVGSFEISR…RREISGKKMV (343 aa)) form the Enoyl reductase (ER) domain. Residues 48–51 (CDWK), 172–175 (SSAS), 195–198 (SPKN), Tyr-213, 260–261 (FE), and 351–352 (IS) each bind NADP(+).

It belongs to the zinc-containing alcohol dehydrogenase family. As to quaternary structure, monomer.

It participates in mycotoxin biosynthesis. Functionally, trans-enoyl reductasee; part of the gene cluster that mediates the biosynthesis of GKK1032, fungal natural products containing a macrocyclic para-cyclophane connected to a decahydrofluorene ring system that show potent antitumor activities. Within the pathway, the PKS-NRPS gkaA, with the help of the trans-enoyl reductase gkaC, synthesize the polyketide-tyrosyl acyl thioester product which can be reductively off-loaded by the terminal reductase (R) domain in gkaA. The PKS module of gkaA acts in combination with the trans-acting enoyl reductase gkaC to produce a methylated polyketide attached to the ACP domain. In parallel, the adenylation (A) domain of the NRPS module activated L-tyrosine, which is then transferred to the ACP domain. The condensation (C) domain subsequently links this group to the polyketide chain, forming an enzyme-bound amide. The alpha/beta hydrolase gkaG is then required to catalyze the subsequent Knoevenagel condensation that affords the 3-pyrrolin-2-one ring, whereas the three proteins gkaB, gkadX and gkaZ then function synergistically to form the cyclophane. The polypeptide is Trans-enoyl reductase gkaC (Penicillium citrinum).